Consider the following 217-residue polypeptide: Large ribosomal subunit protein uL1 (217 aa).

Position 2 is an N-acetylserine (serine 2). Tyrosine 11 carries the phosphotyrosine modification. Residues lysine 91 and lysine 106 each carry the N6-acetyllysine modification. Position 118 is an N6-acetyllysine; alternate (lysine 118). Residue lysine 118 forms a Glycyl lysine isopeptide (Lys-Gly) (interchain with G-Cter in SUMO1); alternate linkage. Lysine 118 participates in a covalent cross-link: Glycyl lysine isopeptide (Lys-Gly) (interchain with G-Cter in SUMO2); alternate. Lysine 161 is covalently cross-linked (Glycyl lysine isopeptide (Lys-Gly) (interchain with G-Cter in SUMO2)).

Belongs to the universal ribosomal protein uL1 family. In terms of assembly, component of the large ribosomal subunit.

Its subcellular location is the cytoplasm. Functionally, component of the large ribosomal subunit. The ribosome is a large ribonucleoprotein complex responsible for the synthesis of proteins in the cell. The sequence is that of Large ribosomal subunit protein uL1 (RPL10A) from Bos taurus (Bovine).